The following is a 154-amino-acid chain: Myoglobin (154 aa).

The 147-residue stretch at 2 to 148 folds into the Globin domain; sequence GLSDGEWQLV…FRNDIAAKYK (147 aa). At serine 4 the chain carries Phosphoserine. Nitrite is bound at residue histidine 65. Histidine 65 contacts O2. Threonine 68 is modified (phosphothreonine). Position 94 (histidine 94) interacts with heme b.

The protein belongs to the globin family. Monomeric.

Its subcellular location is the cytoplasm. The protein resides in the sarcoplasm. The enzyme catalyses Fe(III)-heme b-[protein] + nitric oxide + H2O = Fe(II)-heme b-[protein] + nitrite + 2 H(+). It catalyses the reaction H2O2 + AH2 = A + 2 H2O. Functionally, monomeric heme protein which primary function is to store oxygen and facilitate its diffusion within muscle tissues. Reversibly binds oxygen through a pentacoordinated heme iron and enables its timely and efficient release as needed during periods of heightened demand. Depending on the oxidative conditions of tissues and cells, and in addition to its ability to bind oxygen, it also has a nitrite reductase activity whereby it regulates the production of bioactive nitric oxide. Under stress conditions, like hypoxia and anoxia, it also protects cells against reactive oxygen species thanks to its pseudoperoxidase activity. In Lepilemur mustelinus (Weasel sportive lemur), this protein is Myoglobin (MB).